A 505-amino-acid polypeptide reads, in one-letter code: MTEKTTKSKNSIATKNIVRVSLICFLLVFSVTVPFVFSPVSNASGQTTTLVDGFEDGTLSPWQTFQSFSVNTNNPYKGDYSAVANSDDNTIFVTTNNDQYTAATVAVNIKDSNNNARILFQDRPDSNNADLLANIYIESGNVGFYGGNGQDTGIDISYSEWVVFEIKNIDYSNQKYDIEVYDKSGNSLGSFSGADFYDSVSSMNGVDIYKVDSGSRVDHFTTGEFVSKSTVSGNVTDLEGNPMANATVTADSVSTTTDDNGSYSIKLADGTYDITANKKNYKPQTKQIEVNGSAKTVDFSLGKIEKQLSIEGPNFVRPNQTIPYKVEYTNETGTYDVSNYSNITSANTTLLSIDETNKTLLAGGQNATVKVTAKYNTTEVTTNVTKQYYVSYLKLENIDTVPPAKWMQAFLGFDDGYAENKNMKGIGSDIQWLLFTVIIMSTIAKLFDNPWAGIGSGVITGVLLWVLEYIGLGLLLSMVFFGIFIGLILVRVRRDGGNEVTINES.

3 hydrophobic regions span residues 20-40 (VSLI…FSPV), 423-443 (MKGI…MSTI), and 470-490 (IGLG…LILV).

Its subcellular location is the virion. The protein is Structural protein 27 of His1 virus (isolate Australia/Victoria) (His1V).